We begin with the raw amino-acid sequence, 359 residues long: MAP kinase-activated protein kinase 2 (359 aa).

One can recognise a Protein kinase domain in the interval 20–281 (VTSNTVLGYG…IQDVISNKWI (262 aa)). ATP-binding positions include 26-34 (LGYGINGKV) and Lys-49. The Proton acceptor role is filled by Asp-142.

The protein belongs to the protein kinase superfamily. CAMK Ser/Thr protein kinase family. Phosphorylated and activated by MAP kinase.

The catalysed reaction is L-seryl-[protein] + ATP = O-phospho-L-seryl-[protein] + ADP + H(+). The enzyme catalyses L-threonyl-[protein] + ATP = O-phospho-L-threonyl-[protein] + ADP + H(+). In terms of biological role, its physiological substrate seems to be the small heat shock protein (HSP27/HSP25). In Drosophila melanogaster (Fruit fly), this protein is MAP kinase-activated protein kinase 2 (MAPk-Ak2).